The chain runs to 131 residues: MRKTSLLNSNISSVISKMGHTDMLAIGDCGLPIPKETERIDLALIKGVPGFIETLKAILEELQVEEVLIAKETEKVSPELFTEIKEIIKDTKITFISHEELKKELKDCKAVVRTGEQTPYANIILKSGVVF.

Residue His20 is the Proton donor of the active site. Residues Asp28, His98, and 120-122 (YAN) contribute to the substrate site.

Belongs to the RbsD / FucU family. RbsD subfamily. As to quaternary structure, homodecamer.

Its subcellular location is the cytoplasm. It carries out the reaction beta-D-ribopyranose = beta-D-ribofuranose. It functions in the pathway carbohydrate metabolism; D-ribose degradation; D-ribose 5-phosphate from beta-D-ribopyranose: step 1/2. Functionally, catalyzes the interconversion of beta-pyran and beta-furan forms of D-ribose. This is D-ribose pyranase from Clostridium perfringens (strain ATCC 13124 / DSM 756 / JCM 1290 / NCIMB 6125 / NCTC 8237 / Type A).